A 177-amino-acid chain; its full sequence is Large ribosomal subunit protein uL6 (177 aa).

Residues 152 to 171 (RPPEPYKGKGVRYDDEEVRR) show a composition bias toward basic and acidic residues. The tract at residues 152 to 177 (RPPEPYKGKGVRYDDEEVRRKEAKKK) is disordered.

The protein belongs to the universal ribosomal protein uL6 family. Part of the 50S ribosomal subunit.

In terms of biological role, this protein binds to the 23S rRNA, and is important in its secondary structure. It is located near the subunit interface in the base of the L7/L12 stalk, and near the tRNA binding site of the peptidyltransferase center. The protein is Large ribosomal subunit protein uL6 of Shewanella oneidensis (strain ATCC 700550 / JCM 31522 / CIP 106686 / LMG 19005 / NCIMB 14063 / MR-1).